Consider the following 981-residue polypeptide: Calsyntenin-1 (981 aa).

Residues Met-1 to Ala-28 form the signal peptide. Topologically, residues Ala-29–Thr-859 are extracellular. 2 consecutive Cadherin domains span residues Leu-38–Phe-164 and Lys-165–Trp-265. Asn-346, Asn-366, and Asn-515 each carry an N-linked (GlcNAc...) asparagine glycan. The helical transmembrane segment at Ala-860 to Phe-880 threads the bilayer. Residues Arg-881–Tyr-981 lie on the Cytoplasmic side of the membrane. The tract at residues Met-915–Tyr-981 is disordered. Residues Glu-925–Gln-960 are compositionally biased toward acidic residues. Over residues Asp-962–Tyr-981 the composition is skewed to polar residues.

It belongs to the calsyntenin family. In terms of assembly, directly interacts with APBA2. Forms a tripartite complex with APBA2 and APP. Interacts with KLC1. As to quaternary structure, interacts with APBB1; this interaction stabilizes AlcICD metabolism. Interacts with PSEN1. In terms of processing, proteolytically processed under normal cellular conditions. A primary zeta-cleavage generates a large extracellular (soluble) N-terminal domain (sAlc) and a short C-terminal transmembrane fragment (CTF1). A secondary cleavage catalyzed by presenilin gamma-secretase within the transmembrane domain releases the beta-Alc-alpha chain in the extracellular milieu and produces an intracellular fragment (AlcICD). This processing is strongly suppressed in the tripartite complex formed with APBA2 and APP, which seems to prevent the association with PSEN1. In terms of tissue distribution, expressed in the brain and, a lower level, in the heart, skeletal muscle, kidney and placenta. Accumulates in dystrophic neurites around the amyloid core of Alzheimer disease senile plaques (at protein level).

It is found in the postsynaptic cell membrane. Its subcellular location is the endoplasmic reticulum membrane. The protein localises to the golgi apparatus membrane. The protein resides in the cell projection. It localises to the neuron projection. It is found in the nucleus. Its function is as follows. Postsynaptic adhesion molecule that binds to presynaptic neurexins to mediate both excitatory and inhibitory synapse formation. Promotes synapse development by acting as a cell adhesion molecule at the postsynaptic membrane, which associates with neurexin-alpha at the presynaptic membrane. Also functions as a cargo in axonal anterograde transport by acting as a molecular adapter that promotes KLC1 association with vesicles. Complex formation with APBA2 and APP, stabilizes APP metabolism and enhances APBA2-mediated suppression of beta-APP40 secretion, due to the retardation of intracellular APP maturation. As intracellular fragment AlcICD, suppresses APBB1-dependent transactivation stimulated by APP C-terminal intracellular fragment (AICD), most probably by competing with AICD for APBB1-binding. In terms of biological role, in complex with APBA2 and C99, a C-terminal APP fragment, abolishes C99 interaction with PSEN1 and thus APP C99 cleavage by gamma-secretase, most probably through stabilization of the direct interaction between APBA2 and APP. The sequence is that of Calsyntenin-1 from Homo sapiens (Human).